The sequence spans 363 residues: Putative F-box protein At4g22170 (363 aa).

An F-box domain is found at 7–58; it reads PNSWSDLPHDLLNLVFERLSFANFNRARSVCSSWYSASRQSVPKNQIHWLIL.

In Arabidopsis thaliana (Mouse-ear cress), this protein is Putative F-box protein At4g22170.